The sequence spans 105 residues: NADH-quinone oxidoreductase subunit K (105 aa).

3 helical membrane passes run 9–29 (PNYY…GVLV), 34–54 (IVLF…LVTF), and 65–85 (IIAF…LAII).

It belongs to the complex I subunit 4L family. As to quaternary structure, NDH-1 is composed of 14 different subunits. Subunits NuoA, H, J, K, L, M, N constitute the membrane sector of the complex.

The protein localises to the cell membrane. The enzyme catalyses a quinone + NADH + 5 H(+)(in) = a quinol + NAD(+) + 4 H(+)(out). Functionally, NDH-1 shuttles electrons from NADH, via FMN and iron-sulfur (Fe-S) centers, to quinones in the respiratory chain. The immediate electron acceptor for the enzyme in this species is believed to be a menaquinone. Couples the redox reaction to proton translocation (for every two electrons transferred, four hydrogen ions are translocated across the cytoplasmic membrane), and thus conserves the redox energy in a proton gradient. This chain is NADH-quinone oxidoreductase subunit K, found in Salinispora arenicola (strain CNS-205).